Here is a 238-residue protein sequence, read N- to C-terminus: Ribosomal RNA large subunit methyltransferase E (238 aa).

S-adenosyl-L-methionine-binding residues include G76, W78, D99, D115, and D139. The active-site Proton acceptor is the K179.

This sequence belongs to the class I-like SAM-binding methyltransferase superfamily. RNA methyltransferase RlmE family.

Its subcellular location is the cytoplasm. The catalysed reaction is uridine(2552) in 23S rRNA + S-adenosyl-L-methionine = 2'-O-methyluridine(2552) in 23S rRNA + S-adenosyl-L-homocysteine + H(+). Its function is as follows. Specifically methylates the uridine in position 2552 of 23S rRNA at the 2'-O position of the ribose in the fully assembled 50S ribosomal subunit. In Rhodopseudomonas palustris (strain BisB18), this protein is Ribosomal RNA large subunit methyltransferase E.